Reading from the N-terminus, the 146-residue chain is 3-dehydroquinate dehydratase (146 aa).

Tyr-24 acts as the Proton acceptor in catalysis. Asn-73, His-79, and Asp-86 together coordinate substrate. His-99 functions as the Proton donor in the catalytic mechanism. Residues 100 to 101 and Arg-110 contribute to the substrate site; that span reads LS.

Belongs to the type-II 3-dehydroquinase family. As to quaternary structure, homododecamer.

The catalysed reaction is 3-dehydroquinate = 3-dehydroshikimate + H2O. Its pathway is metabolic intermediate biosynthesis; chorismate biosynthesis; chorismate from D-erythrose 4-phosphate and phosphoenolpyruvate: step 3/7. Functionally, catalyzes a trans-dehydration via an enolate intermediate. The protein is 3-dehydroquinate dehydratase of Shewanella baltica (strain OS223).